A 429-amino-acid chain; its full sequence is Serine hydroxymethyltransferase (429 aa).

(6S)-5,6,7,8-tetrahydrofolate-binding positions include L126 and 130–132 (GHL). Residue K235 is modified to N6-(pyridoxal phosphate)lysine. 359 to 361 (SPF) lines the (6S)-5,6,7,8-tetrahydrofolate pocket.

The protein belongs to the SHMT family. As to quaternary structure, homodimer. The cofactor is pyridoxal 5'-phosphate.

The protein localises to the cytoplasm. The enzyme catalyses (6R)-5,10-methylene-5,6,7,8-tetrahydrofolate + glycine + H2O = (6S)-5,6,7,8-tetrahydrofolate + L-serine. The protein operates within one-carbon metabolism; tetrahydrofolate interconversion. It participates in amino-acid biosynthesis; glycine biosynthesis; glycine from L-serine: step 1/1. Catalyzes the reversible interconversion of serine and glycine with tetrahydrofolate (THF) serving as the one-carbon carrier. This reaction serves as the major source of one-carbon groups required for the biosynthesis of purines, thymidylate, methionine, and other important biomolecules. Also exhibits THF-independent aldolase activity toward beta-hydroxyamino acids, producing glycine and aldehydes, via a retro-aldol mechanism. The chain is Serine hydroxymethyltransferase from Synechococcus sp. (strain CC9311).